Consider the following 833-residue polypeptide: Phenylalanine--tRNA ligase beta subunit (833 aa).

The region spanning 42-157 (ADLKGPLAVG…PEYEVGTDAI (116 aa)) is the tRNA-binding domain. The 75-residue stretch at 411-485 (SAPHTITIPA…RLEGYENLPS (75 aa)) folds into the B5 domain. Mg(2+)-binding residues include D463, D469, E472, and E473. In terms of domain architecture, FDX-ACB spans 739–832 (STFPVATQDV…AAERTGAALR (94 aa)).

The protein belongs to the phenylalanyl-tRNA synthetase beta subunit family. Type 1 subfamily. As to quaternary structure, tetramer of two alpha and two beta subunits. The cofactor is Mg(2+).

It is found in the cytoplasm. The catalysed reaction is tRNA(Phe) + L-phenylalanine + ATP = L-phenylalanyl-tRNA(Phe) + AMP + diphosphate + H(+). This chain is Phenylalanine--tRNA ligase beta subunit, found in Streptomyces avermitilis (strain ATCC 31267 / DSM 46492 / JCM 5070 / NBRC 14893 / NCIMB 12804 / NRRL 8165 / MA-4680).